The chain runs to 130 residues: Small ribosomal subunit protein uS9 (130 aa).

The interval 108 to 130 is disordered; the sequence is PRMKERRKYGLKKARRAPQFSKR. Basic residues predominate over residues 111–130; sequence KERRKYGLKKARRAPQFSKR.

Belongs to the universal ribosomal protein uS9 family.

This is Small ribosomal subunit protein uS9 from Desulforamulus reducens (strain ATCC BAA-1160 / DSM 100696 / MI-1) (Desulfotomaculum reducens).